A 512-amino-acid polypeptide reads, in one-letter code: Oryzalexin E synthase (512 aa).

Residues 6 to 26 (SELWMTAVATCMSLLLYLTIL) form a helical membrane-spanning segment. Position 452 (C452) interacts with heme.

This sequence belongs to the cytochrome P450 family. It depends on heme as a cofactor.

It is found in the membrane. The enzyme catalyses ent-sandaracopimaradien-3beta-ol + reduced [NADPH--hemoprotein reductase] + O2 = oryzalexin E + oxidized [NADPH--hemoprotein reductase] + H2O + H(+). Its function is as follows. Enzyme of the diterpenoid metabolism involved in the biosynthesis of the oryzalexin class of phytoalexins. Can use ent-sandaracopimaradien and syn-stemodene as substrates, but no activity with syn-stemoden-19-oic acid. Hydroxylates 3-alpha-hydroxy-ent-sandaracopimaradiene at C-9-beta, resulting in a 3-alpha,9-beta-diol corresponding to oryzalexins E. In Oryza sativa subsp. japonica (Rice), this protein is Oryzalexin E synthase.